A 1215-amino-acid chain; its full sequence is Pesticidal crystal protein Cry1Ka (1215 aa).

This sequence belongs to the delta endotoxin family.

In terms of biological role, promotes colloidosmotic lysis by binding to the midgut epithelial cells of insects. Selectively toxic to Artogeia rapae but not active on Plutella xylostella. The polypeptide is Pesticidal crystal protein Cry1Ka (cry1Ka) (Bacillus thuringiensis subsp. morrisoni).